We begin with the raw amino-acid sequence, 182 residues long: Small ribosomal subunit protein uS5 (182 aa).

An S5 DRBM domain is found at F16–V79.

This sequence belongs to the universal ribosomal protein uS5 family. In terms of assembly, part of the 30S ribosomal subunit. Contacts proteins S4 and S8.

Functionally, with S4 and S12 plays an important role in translational accuracy. In terms of biological role, located at the back of the 30S subunit body where it stabilizes the conformation of the head with respect to the body. The polypeptide is Small ribosomal subunit protein uS5 (Bartonella quintana (strain Toulouse) (Rochalimaea quintana)).